Reading from the N-terminus, the 105-residue chain is UPF0145 protein CPS_2458 (105 aa).

Belongs to the UPF0145 family.

This is UPF0145 protein CPS_2458 from Colwellia psychrerythraea (strain 34H / ATCC BAA-681) (Vibrio psychroerythus).